The chain runs to 392 residues: Iron-sulfur cluster assembly SufBD family protein ML0594 (392 aa).

It belongs to the iron-sulfur cluster assembly SufBD family.

This chain is Iron-sulfur cluster assembly SufBD family protein ML0594, found in Mycobacterium leprae (strain TN).